Reading from the N-terminus, the 249-residue chain is tRNA (guanine-N(1)-)-methyltransferase (249 aa).

S-adenosyl-L-methionine is bound by residues Gly113 and 133 to 138; that span reads IGDFVL.

It belongs to the RNA methyltransferase TrmD family. In terms of assembly, homodimer.

The protein resides in the cytoplasm. The enzyme catalyses guanosine(37) in tRNA + S-adenosyl-L-methionine = N(1)-methylguanosine(37) in tRNA + S-adenosyl-L-homocysteine + H(+). Specifically methylates guanosine-37 in various tRNAs. The sequence is that of tRNA (guanine-N(1)-)-methyltransferase from Photobacterium profundum (strain SS9).